The primary structure comprises 199 residues: Adenylyl-sulfate kinase (199 aa).

Position 31–38 (31–38 (GLSGSGKS)) interacts with ATP. Ser-105 functions as the Phosphoserine intermediate in the catalytic mechanism.

This sequence belongs to the APS kinase family.

The enzyme catalyses adenosine 5'-phosphosulfate + ATP = 3'-phosphoadenylyl sulfate + ADP + H(+). It participates in sulfur metabolism; hydrogen sulfide biosynthesis; sulfite from sulfate: step 2/3. Catalyzes the synthesis of activated sulfate. The sequence is that of Adenylyl-sulfate kinase from Marinobacter nauticus (strain ATCC 700491 / DSM 11845 / VT8) (Marinobacter aquaeolei).